The sequence spans 365 residues: NAC domain-containing protein 37 (365 aa).

Residues 9-158 (VPPGFRFHPT…GWVVCRAFKK (150 aa)) enclose the NAC domain. Residues 109–164 (IGMRKTLVFYKGRAPNGKKSDWIMHEYRLESDENAPPQEEGWVVCRAFKKRATGQA) mediate DNA binding.

It belongs to the plant vascular related NAC-domain protein family. In terms of assembly, interacts with NAC030/VND7. As to expression, expressed in root metaxylem pole and in shoot pre-procambium and procambium. Present in root developing xylems. Specifically expressed in vessels but not in interfascicular fibers in stems.

The protein resides in the nucleus. Transcription activator that binds to the secondary wall NAC binding element (SNBE), 5'-(T/A)NN(C/T)(T/C/G)TNNNNNNNA(A/C)GN(A/C/T)(A/T)-3', in the promoter of target genes. Involved in xylem formation by promoting the expression of secondary wall-associated transcription factors and of genes involved in secondary wall biosynthesis and programmed cell death, genes driven by the secondary wall NAC binding element (SNBE). Triggers thickening of secondary walls. The sequence is that of NAC domain-containing protein 37 from Arabidopsis thaliana (Mouse-ear cress).